Here is a 748-residue protein sequence, read N- to C-terminus: Transcription factor FBD3 (748 aa).

The span at 1-10 (MPEQPRRPSD) shows a compositional bias: basic and acidic residues. The segment at 1-26 (MPEQPRRPSDQEQNQSETGPPTNKRR) is disordered. The span at 11–21 (QEQNQSETGPP) shows a compositional bias: polar residues. Positions 32–59 (CNACRSRKSRCDGQRPSCSSCLSLGFDC) form a DNA-binding region, zn(2)-C6 fungal-type. Disordered stretches follow at residues 116-160 (GTIN…EGIP) and 417-438 (IPDE…TSGN). Residues 131 to 141 (APTKASAPSGA) show a composition bias toward low complexity. Residues 429-438 (SGRSPATSGN) show a composition bias toward polar residues.

The protein resides in the nucleus. Functionally, transcription factor; part of the Fusarium detoxification of benzoxazolinone cluster 2 (FDB2) involved in the degradation of benzoxazolinones produced by the host plant. Maize, wheat, and rye produce the 2 benzoxazinone phytoanticipins 2,4-dihy-droxy-7-methoxy-1,4-benzoxazin-3-one (DIMBOA) and 2,4-dihydroxy-1,4-benzoxazin-3-one (DIBOA) that, due to their inherent instability once released, spontaneously degrade to the more stable corresponding benzoxazolinones, 6-methoxy-2-benzoxazolinone (MBOA) and 2-benzoxazolinone (BOA), respectively. FDB3 is not essentiel, but contributes to efficient BOA biotransformation. This is Transcription factor FBD3 from Gibberella moniliformis (strain M3125 / FGSC 7600) (Maize ear and stalk rot fungus).